A 137-amino-acid polypeptide reads, in one-letter code: Fluoride-specific ion channel FluC 1 (137 aa).

4 helical membrane passes run 4-24 (LIYI…YYLG), 37-57 (LATL…TTYI), 67-87 (VITG…TFSV), and 98-118 (WGIA…MSGL). Na(+)-binding residues include glycine 77 and threonine 80.

It belongs to the fluoride channel Fluc/FEX (TC 1.A.43) family.

Its subcellular location is the cell membrane. It catalyses the reaction fluoride(in) = fluoride(out). Its activity is regulated as follows. Na(+) is not transported, but it plays an essential structural role and its presence is essential for fluoride channel function. Its function is as follows. Fluoride-specific ion channel. Important for reducing fluoride concentration in the cell, thus reducing its toxicity. In Bacillus cereus (strain ZK / E33L), this protein is Fluoride-specific ion channel FluC 1.